The chain runs to 327 residues: E3 ubiquitin ligase Rnf121 (327 aa).

Helical transmembrane passes span 50–70 (MHAEMVLILIATLVVAQLLLV), 79–96 (SYNMVTLFQMWIVPVYFT), 99–119 (LHWWRFLGIWIVFSIITAYIT), 148–168 (ATGIVGYIAVMFTLFGLNLLF), and 173–193 (EDAMDFGISLLFYGLYYGVLG). Residues 226 to 276 (CAVCGQQIFVDVNEEGIIENTYRLSCNHVFHEFCIRGWCIVGKKQTCPYCK) form an RING-type; atypical zinc finger.

Belongs to the RNF121 family.

It is found in the endoplasmic reticulum membrane. It catalyses the reaction S-ubiquitinyl-[E2 ubiquitin-conjugating enzyme]-L-cysteine + [acceptor protein]-L-lysine = [E2 ubiquitin-conjugating enzyme]-L-cysteine + N(6)-ubiquitinyl-[acceptor protein]-L-lysine.. It participates in protein modification; protein ubiquitination. E3 ubiquitin ligase which accepts ubiquitin and transfers it to substrates thereby promoting their degradation by the endoplasmic reticulum-associated degradation (ERAD) pathway which is a pathway involved in ubiquitin-dependent degradation of misfolded endoplasmic reticulum proteins. May regulate the unfolded protein response to reduce endoplasmic reticulum stress. The sequence is that of E3 ubiquitin ligase Rnf121 (rnf121) from Xenopus laevis (African clawed frog).